Here is a 506-residue protein sequence, read N- to C-terminus: ATP-dependent rRNA helicase RRP3 (506 aa).

Disordered regions lie at residues 1 to 22 (MSGK…KSKE) and 37 to 88 (NQKK…FESF). Positions 49-69 (SDQEDDPSESEEEEGSDSEDV) are enriched in acidic residues. Residues 86 to 114 (ESFSDLDLVPELIEACKNLNFAKPTPIQA) carry the Q motif motif. Residues 117 to 289 (IPPALQGHDI…RASLTNPVKC (173 aa)) form the Helicase ATP-binding domain. 130-137 (AQTGSGKT) is a binding site for ATP. Positions 236–239 (DEAD) match the DEAD box motif. The 149-residue stretch at 312 to 460 (LKNTYLIYLM…KENVNKDAIL (149 aa)) folds into the Helicase C-terminal domain. Residues 485 to 506 (IARGKGRRGRMAARDDMDKGER) are disordered. Basic and acidic residues predominate over residues 496–506 (AARDDMDKGER).

It belongs to the DEAD box helicase family. DDX47/RRP3 subfamily. Interacts with the SSU processome.

The protein resides in the nucleus. The catalysed reaction is ATP + H2O = ADP + phosphate + H(+). ATP-dependent rRNA helicase required for pre-ribosomal RNA processing. Involved in the maturation of the 35S-pre-rRNA and to its cleavage to mature 18S rRNA. The chain is ATP-dependent rRNA helicase RRP3 from Vanderwaltozyma polyspora (strain ATCC 22028 / DSM 70294 / BCRC 21397 / CBS 2163 / NBRC 10782 / NRRL Y-8283 / UCD 57-17) (Kluyveromyces polysporus).